Here is a 356-residue protein sequence, read N- to C-terminus: tRNA-specific 2-thiouridylase MnmA (356 aa).

ATP contacts are provided by residues 8–15 (GMSGGVDS) and Met-34. Cys-103 (nucleophile) is an active-site residue. Cys-103 and Cys-199 are disulfide-bonded. Position 127 (Gly-127) interacts with ATP. The segment at 149–151 (KDQ) is interaction with tRNA. Catalysis depends on Cys-199, which acts as the Cysteine persulfide intermediate. The tract at residues 305–306 (RY) is interaction with tRNA.

This sequence belongs to the MnmA/TRMU family.

The protein localises to the cytoplasm. The catalysed reaction is S-sulfanyl-L-cysteinyl-[protein] + uridine(34) in tRNA + AH2 + ATP = 2-thiouridine(34) in tRNA + L-cysteinyl-[protein] + A + AMP + diphosphate + H(+). Functionally, catalyzes the 2-thiolation of uridine at the wobble position (U34) of tRNA, leading to the formation of s(2)U34. In Clostridium kluyveri (strain ATCC 8527 / DSM 555 / NBRC 12016 / NCIMB 10680 / K1), this protein is tRNA-specific 2-thiouridylase MnmA.